The sequence spans 181 residues: Regulator of G-protein signaling 5 (181 aa).

One can recognise an RGS domain in the interval 64–180; sequence SLDKLLQNNY…VRSEFYQEFI (117 aa).

It is found in the cytoplasm. Its subcellular location is the membrane. Its function is as follows. Inhibits signal transduction by increasing the GTPase activity of G protein alpha subunits thereby driving them into their inactive GDP-bound form. Binds to G(i)-alpha and G(o)-alpha, but not to G(s)-alpha. The protein is Regulator of G-protein signaling 5 (RGS5) of Sus scrofa (Pig).